Here is a 159-residue protein sequence, read N- to C-terminus: 3-hydroxyacyl-[acyl-carrier-protein] dehydratase FabZ (159 aa).

H58 is an active-site residue.

This sequence belongs to the thioester dehydratase family. FabZ subfamily.

It localises to the cytoplasm. The catalysed reaction is a (3R)-hydroxyacyl-[ACP] = a (2E)-enoyl-[ACP] + H2O. In terms of biological role, involved in unsaturated fatty acids biosynthesis. Catalyzes the dehydration of short chain beta-hydroxyacyl-ACPs and long chain saturated and unsaturated beta-hydroxyacyl-ACPs. This Helicobacter pylori (strain ATCC 700392 / 26695) (Campylobacter pylori) protein is 3-hydroxyacyl-[acyl-carrier-protein] dehydratase FabZ.